The following is a 404-amino-acid chain: Photosynthetic reaction center cytochrome c subunit (404 aa).

An N-terminal signal peptide occupies residues 1–22; it reads MSPAQQLTLPAVIVVASVMLLG. Residue Cys-23 is the site of N-palmitoyl cysteine attachment. Residue Cys-23 is the site of S-diacylglycerol cysteine attachment. Met-94, Cys-107, Cys-110, His-111, Met-130, His-144, Cys-152, Cys-155, His-156, Met-236, Cys-247, Cys-250, His-251, Cys-307, Cys-310, and His-311 together coordinate heme. The segment at 346–404 is disordered; it reads ASEAAPAAATEAAPEAPAQEVPAAEAVPAAAEPGAAEAAGSVEPAPVEEVAPAPAAQRL.

In terms of assembly, component of the photosynthetic reaction center composed of protein subunits L (PufL), M (PufM), H (PuhA) and cytochrome C (PufC). The reaction center interacts with light-harvesting antenna complex LH1. Binds 4 heme groups per subunit.

It is found in the cellular chromatophore membrane. In terms of biological role, the reaction center of purple bacteria contains a tightly bound cytochrome molecule which re-reduces the photo oxidized primary electron donor. In Thermochromatium tepidum (Chromatium tepidum), this protein is Photosynthetic reaction center cytochrome c subunit.